Consider the following 673-residue polypeptide: UvrABC system protein B (673 aa).

The Helicase ATP-binding domain occupies asparagine 30–arginine 417. Residue glycine 43–threonine 50 coordinates ATP. Positions tyrosine 96–isoleucine 119 match the Beta-hairpin motif. The 167-residue stretch at glutamine 434–leucine 600 folds into the Helicase C-terminal domain. In terms of domain architecture, UVR spans lysine 627–lysine 662.

It belongs to the UvrB family. In terms of assembly, forms a heterotetramer with UvrA during the search for lesions. Interacts with UvrC in an incision complex.

It is found in the cytoplasm. The UvrABC repair system catalyzes the recognition and processing of DNA lesions. A damage recognition complex composed of 2 UvrA and 2 UvrB subunits scans DNA for abnormalities. Upon binding of the UvrA(2)B(2) complex to a putative damaged site, the DNA wraps around one UvrB monomer. DNA wrap is dependent on ATP binding by UvrB and probably causes local melting of the DNA helix, facilitating insertion of UvrB beta-hairpin between the DNA strands. Then UvrB probes one DNA strand for the presence of a lesion. If a lesion is found the UvrA subunits dissociate and the UvrB-DNA preincision complex is formed. This complex is subsequently bound by UvrC and the second UvrB is released. If no lesion is found, the DNA wraps around the other UvrB subunit that will check the other stand for damage. The chain is UvrABC system protein B from Borreliella burgdorferi (strain ATCC 35210 / DSM 4680 / CIP 102532 / B31) (Borrelia burgdorferi).